The primary structure comprises 102 residues: Small ribosomal subunit protein uS10 (102 aa).

This sequence belongs to the universal ribosomal protein uS10 family. Part of the 30S ribosomal subunit.

In terms of biological role, involved in the binding of tRNA to the ribosomes. The protein is Small ribosomal subunit protein uS10 of Rhodospirillum rubrum (strain ATCC 11170 / ATH 1.1.1 / DSM 467 / LMG 4362 / NCIMB 8255 / S1).